The following is a 355-amino-acid chain: tRNA-specific 2-thiouridylase MnmA (355 aa).

ATP is bound by residues 6–13 and Met32; that span reads AMSGGVDS. Cys93 serves as the catalytic Nucleophile. Cys93 and Cys191 are joined by a disulfide. Residue Gly117 coordinates ATP. The interval 140–142 is interaction with tRNA; sequence KDQ. Cys191 (cysteine persulfide intermediate) is an active-site residue. Positions 296–297 are interaction with tRNA; sequence RY.

The protein belongs to the MnmA/TRMU family.

It is found in the cytoplasm. The catalysed reaction is S-sulfanyl-L-cysteinyl-[protein] + uridine(34) in tRNA + AH2 + ATP = 2-thiouridine(34) in tRNA + L-cysteinyl-[protein] + A + AMP + diphosphate + H(+). In terms of biological role, catalyzes the 2-thiolation of uridine at the wobble position (U34) of tRNA, leading to the formation of s(2)U34. This Pelobacter propionicus (strain DSM 2379 / NBRC 103807 / OttBd1) protein is tRNA-specific 2-thiouridylase MnmA.